The primary structure comprises 161 residues: ATP synthase subunit b (161 aa).

The chain crosses the membrane as a helical span at residues 12–32 (IAFFLFVFFCMKYIWPNLISL).

The protein belongs to the ATPase B chain family. In terms of assembly, F-type ATPases have 2 components, F(1) - the catalytic core - and F(0) - the membrane proton channel. F(1) has five subunits: alpha(3), beta(3), gamma(1), delta(1), epsilon(1). F(0) has three main subunits: a(1), b(2) and c(10-14). The alpha and beta chains form an alternating ring which encloses part of the gamma chain. F(1) is attached to F(0) by a central stalk formed by the gamma and epsilon chains, while a peripheral stalk is formed by the delta and b chains.

The protein resides in the cell membrane. F(1)F(0) ATP synthase produces ATP from ADP in the presence of a proton or sodium gradient. F-type ATPases consist of two structural domains, F(1) containing the extramembraneous catalytic core and F(0) containing the membrane proton channel, linked together by a central stalk and a peripheral stalk. During catalysis, ATP synthesis in the catalytic domain of F(1) is coupled via a rotary mechanism of the central stalk subunits to proton translocation. In terms of biological role, component of the F(0) channel, it forms part of the peripheral stalk, linking F(1) to F(0). The polypeptide is ATP synthase subunit b (Wigglesworthia glossinidia brevipalpis).